The sequence spans 183 residues: NEDD8-conjugating enzyme Ubc12 (183 aa).

Met1 bears the N-acetylmethionine mark. A disordered region spans residues 1 to 28 (MIKLFSLKQQKKEEESAGGTKGSSKKAS). Residues 29-173 (AAQLRIQKDI…VQRSMRGGYI (145 aa)) form the UBC core domain. The Glycyl thioester intermediate role is filled by Cys111.

Belongs to the ubiquitin-conjugating enzyme family. UBC12 subfamily. In terms of processing, the acetylation of Met-1 increases affinity for DCUN1D1 by about 2 orders of magnitude and is crucial for NEDD8 transfer to cullins.

It carries out the reaction [E1 NEDD8-activating enzyme]-S-[NEDD8 protein]-yl-L-cysteine + [E2 NEDD8-conjugating enzyme]-L-cysteine = [E1 NEDD8-activating enzyme]-L-cysteine + [E2 NEDD8-conjugating enzyme]-S-[NEDD8-protein]-yl-L-cysteine.. It participates in protein modification; protein neddylation. In terms of biological role, accepts the ubiquitin-like protein NEDD8 from the UBA3-NAE1 E1 complex and catalyzes its covalent attachment to other proteins. The specific interaction with the E3 ubiquitin ligase rbx1, but not rbx2, suggests that the rbx1-ube2m complex neddylates specific target proteins, such as cul1, cul2, cul3 and cul4. Involved in cell proliferation. This chain is NEDD8-conjugating enzyme Ubc12 (ube2m), found in Xenopus tropicalis (Western clawed frog).